We begin with the raw amino-acid sequence, 103 residues long: Large ribosomal subunit protein eL42 (103 aa).

Residues 37-56 (GKRRYDRKQSGFGGQTKPVF) form a disordered region.

This sequence belongs to the eukaryotic ribosomal protein eL42 family.

This is Large ribosomal subunit protein eL42 (rpl36a) from Dictyostelium discoideum (Social amoeba).